Consider the following 396-residue polypeptide: Elongation factor Tu 2 (396 aa).

The tr-type G domain maps to 10 to 206 (KPHVNVGTIG…TLDTYIPEPE (197 aa)). The segment at 19–26 (GHVDHGKT) is G1. Residue 19-26 (GHVDHGKT) coordinates GTP. A Mg(2+)-binding site is contributed by Thr-26. The interval 60–64 (GITIN) is G2. A G3 region spans residues 81-84 (DCPG). GTP is bound by residues 81–85 (DCPGH) and 136–139 (NKCD). The interval 136–139 (NKCD) is G4. The segment at 174 to 176 (SAL) is G5.

The protein belongs to the TRAFAC class translation factor GTPase superfamily. Classic translation factor GTPase family. EF-Tu/EF-1A subfamily. Monomer.

Its subcellular location is the cytoplasm. It catalyses the reaction GTP + H2O = GDP + phosphate + H(+). GTP hydrolase that promotes the GTP-dependent binding of aminoacyl-tRNA to the A-site of ribosomes during protein biosynthesis. This Psychrobacter sp. (strain PRwf-1) protein is Elongation factor Tu 2.